The chain runs to 191 residues: uncharacterized protein (191 aa).

4 consecutive transmembrane segments (helical) span residues 12 to 32, 48 to 68, 92 to 112, and 168 to 188; these read FAFL…FFTL, LVAL…LTLF, YISV…LLSL, and IFCL…SCAF.

It localises to the membrane. This is an uncharacterized protein from Saccharomyces cerevisiae (strain ATCC 204508 / S288c) (Baker's yeast).